A 277-amino-acid chain; its full sequence is Bifunctional protein FolD 1 (277 aa).

NADP(+) is bound by residues Gly-162–Ser-164 and Ser-187.

Belongs to the tetrahydrofolate dehydrogenase/cyclohydrolase family. As to quaternary structure, homodimer.

The enzyme catalyses (6R)-5,10-methylene-5,6,7,8-tetrahydrofolate + NADP(+) = (6R)-5,10-methenyltetrahydrofolate + NADPH. It catalyses the reaction (6R)-5,10-methenyltetrahydrofolate + H2O = (6R)-10-formyltetrahydrofolate + H(+). It participates in one-carbon metabolism; tetrahydrofolate interconversion. Functionally, catalyzes the oxidation of 5,10-methylenetetrahydrofolate to 5,10-methenyltetrahydrofolate and then the hydrolysis of 5,10-methenyltetrahydrofolate to 10-formyltetrahydrofolate. The chain is Bifunctional protein FolD 1 from Syntrophomonas wolfei subsp. wolfei (strain DSM 2245B / Goettingen).